Consider the following 219-residue polypeptide: MDRDAAHAALRRRLAETHLRAEIYKDQTLQLHREGVSTQDPRFVGAFMAAKAAHLELEARLKSRARLEMMRQRATCVKIRVEEQAARRDFLTAHRRYLDPALGERLDAVDDRLADQEEQLEEAATNASLWGDGDLAEGWMSPADSDLLVMWQLTSAPKVHANGPSRIGSHPTYTPTPTGPPGAPAAPLSRTPPSPAPPTGPATDPASASGFARDYPDGE.

The interval 161–219 is disordered; it reads ANGPSRIGSHPTYTPTPTGPPGAPAAPLSRTPPSPAPPTGPATDPASASGFARDYPDGE. Pro residues predominate over residues 177–200; the sequence is PTGPPGAPAAPLSRTPPSPAPPTG.

It belongs to the alphaherpesvirinae HHV-1 UL14 protein family. As to quaternary structure, interacts with UL51. Phosphorylated.

It localises to the virion tegument. It is found in the host cytoplasm. The protein localises to the host nucleus. Functionally, contributes to the nuclear transport of the viral transcriptional activator VP16 during the early phase of infection. Therefore, participates indirectly in the regulation of the immediate-early gene expression. Additionally, seems to be important for efficient nuclear targeting of capsids. The UL51-UL14 complex regulates final viral envelopment for efficient viral replication. This Human herpesvirus 1 (strain 17) (HHV-1) protein is Tegument protein UL14.